A 722-amino-acid chain; its full sequence is Serine/threonine-protein kinase MARK2 (722 aa).

The interval 1–46 (MSSARTPLPTLNERDTEQPTLGHLDSKPSSKSNMLRGRNSATSADE) is disordered. Over residues 27–45 (KPSSKSNMLRGRNSATSAD) the composition is skewed to polar residues. The residue at position 40 (Ser40) is a Phosphoserine. The 252-residue stretch at 53–304 (YRLLKTIGKG…LEQIMKDRWM (252 aa)) folds into the Protein kinase domain. Phosphothreonine; by autocatalysis is present on Thr58. ATP contacts are provided by residues 59–67 (IGKGNFAKV) and Lys82. 3 positions are modified to phosphoserine; by CaMK1: Ser91, Ser92, and Ser93. The active-site Proton acceptor is Asp175. Residue Thr208 is modified to Phosphothreonine; by LKB1 and TAOK1. Ser212 carries the post-translational modification Phosphoserine; by GSK3-beta. Ser274 bears the Phosphoserine; by autocatalysis mark. Thr275 carries the post-translational modification Phosphothreonine; by autocatalysis. Position 294 is a phosphothreonine; by CaMK1 (Thr294). Residues 323–362 (YKDPRRTELMVSMGYTREEIQDSLVGQRYNEVMATYLLLG) form the UBA domain. The disordered stretch occupies residues 373–576 (ITLKPRPSAD…SQGRRGASGS (204 aa)). Residues Ser408 and Ser409 each carry the phosphoserine modification. The span at 417 to 431 (PTSNSYSKKTQSNNA) shows a compositional bias: polar residues. The span at 432–442 (ENKRPEEETGR) shows a compositional bias: basic and acidic residues. A Phosphoserine modification is found at Ser453. Position 464 is a phosphothreonine (Thr464). Over residues 464 to 483 (TPTPSTNSVLSTSTNRSRNS) the composition is skewed to polar residues. Phosphoserine occurs at positions 483 and 490. Over residues 492–505 (GQASIQNGKDSTAP) the composition is skewed to polar residues. The segment covering 511–524 (ASPSAHNISSSSGA) has biased composition (low complexity). Phosphoserine occurs at positions 512, 514, and 535. Thr539 bears the Phosphothreonine; by PKC/PRKCZ mark. Phosphoserine is present on residues Ser562 and Ser656. Residues 673–722 (TPGHENFVQWEMEVCKLPRLSLNGVRFKRISGTSMAFKNIASKIANELKL) form the KA1 domain.

It belongs to the protein kinase superfamily. CAMK Ser/Thr protein kinase family. SNF1 subfamily. As to quaternary structure, homodimer. Interacts (when phosphorylated at Thr-539) with YWHAZ. Interacts with MTCL1; the interaction is direct and increases MARK2 microtubule-binding ability. Interacts with PAK5; leading to inhibit the protein kinase activity. Interacts with MAPT/TAU. Interacts with YWHAB, YWHAG and YWHAQ. Requires Mg(2+) as cofactor. In terms of processing, autophosphorylated. Phosphorylated at Thr-208 by STK11/LKB1 in complex with STE20-related adapter-alpha (STRADA) pseudo kinase and CAB39. Phosphorylation at Thr-208 by TAOK1 activates the kinase activity, leading to phosphorylation and detachment of MAPT/TAU from microtubules. Phosphorylation at Ser-212 by GSK3-beta (GSK3B) inhibits the kinase activity. Phosphorylation by CaMK1 promotes activity and is required to promote neurite outgrowth. Phosphorylation at Thr-539 by PRKCZ/aPKC in polarized epithelial cells inhibits the kinase activity and promotes binding to 14-3-3 protein YWHAZ, leading to relocation from cell membrane to cytoplasm.

It is found in the cell membrane. It localises to the lateral cell membrane. The protein localises to the cytoplasm. Its subcellular location is the cytoskeleton. The protein resides in the cell projection. It is found in the dendrite. It catalyses the reaction L-seryl-[protein] + ATP = O-phospho-L-seryl-[protein] + ADP + H(+). The catalysed reaction is L-threonyl-[protein] + ATP = O-phospho-L-threonyl-[protein] + ADP + H(+). It carries out the reaction L-seryl-[tau protein] + ATP = O-phospho-L-seryl-[tau protein] + ADP + H(+). The enzyme catalyses L-threonyl-[tau protein] + ATP = O-phospho-L-threonyl-[tau protein] + ADP + H(+). Its activity is regulated as follows. Inhibited by hymenialdisine. Activated by phosphorylation on Thr-208 by STK11/LKB1 and TAOK1. Inhibited by phosphorylation at Ser-212 or Thr-539. Inhibited by PAK5; inhibition is independent of the kinase activity of PAK5. Serine/threonine-protein kinase. Involved in cell polarity and microtubule dynamics regulation. Phosphorylates CRTC2/TORC2, DCX, HDAC7, KIF13B, MAP2, MAP4 and RAB11FIP2. Phosphorylates the microtubule-associated protein MAPT/TAU. Plays a key role in cell polarity by phosphorylating the microtubule-associated proteins MAP2, MAP4 and MAPT/TAU at KXGS motifs, causing detachment from microtubules, and their disassembly. Regulates epithelial cell polarity by phosphorylating RAB11FIP2. Involved in the regulation of neuronal migration through its dual activities in regulating cellular polarity and microtubule dynamics, possibly by phosphorylating and regulating DCX. Regulates axogenesis by phosphorylating KIF13B, promoting interaction between KIF13B and 14-3-3 and inhibiting microtubule-dependent accumulation of KIF13B. Also required for neurite outgrowth and establishment of neuronal polarity. Regulates localization and activity of some histone deacetylases by mediating phosphorylation of HDAC7, promoting subsequent interaction between HDAC7 and 14-3-3 and export from the nucleus. Also acts as a positive regulator of the Wnt signaling pathway, probably by mediating phosphorylation of dishevelled proteins (DVL1, DVL2 and/or DVL3). Modulates the developmental decision to build a columnar versus a hepatic epithelial cell apparently by promoting a switch from a direct to a transcytotic mode of apical protein delivery. Essential for the asymmetric development of membrane domains of polarized epithelial cells. This is Serine/threonine-protein kinase MARK2 from Rattus norvegicus (Rat).